The primary structure comprises 1557 residues: Probable kinase PglW (1557 aa).

Residues 12-130 (SEFEHERRGL…VAEAVCFTDN (119 aa)) enclose the NERD domain. Protein kinase domains are found at residues 195–490 (ELER…LEVV) and 530–816 (WEVR…KVFL). Residues 536-544 (LGTGSTSRA) and Lys564 contribute to the ATP site. Disordered regions lie at residues 615 to 634 (DERDDDGPGAEGATRPRRRE) and 821 to 861 (TVPS…QRDR). Residues 830-849 (PAAPADGAAPAEGAAAGIAD) are compositionally biased toward low complexity.

This sequence belongs to the protein kinase superfamily. Ser/Thr protein kinase family.

Functionally, BREX systems (bacteriophage exclusion) provide immunity against bacteriophage. Part of a type 2 BREX system. Previously called the phage growth limitation (Pgl) system, it confers protection against bacteriophage phiC31. The bacteria allows one cycle of phage infection, but subsequent cycles are impaired, protecting the original bacterial colony. The system undergoes high rates (10(-3) to 10(-4)) of phase reversion, i.e. loss and regain of phiC31 resistance. When the pglW-pglX-pglY-pglZ genes are transformed into a susceptible S.lividans (strain 1326) they confer resistance to infection by phage phiC31 and phiBT1; all 4 genes are necessary. The proteins has kinase domains and might bind DNA. In terms of biological role, autophosphorylates when synthesized in vitro, cannot be expressed in E.coli. The sequence is that of Probable kinase PglW from Streptomyces coelicolor (strain ATCC BAA-471 / A3(2) / M145).